The sequence spans 129 residues: Lysozyme C (129 aa).

A C-type lysozyme domain is found at 1–129 (KVFGRCELAA…VRVWIKGCRL (129 aa)). Disulfide bonds link C6–C127, C30–C115, C64–C80, and C76–C94. Residues E35 and D52 contribute to the active site.

The protein belongs to the glycosyl hydrolase 22 family. As to quaternary structure, monomer.

It localises to the secreted. It carries out the reaction Hydrolysis of (1-&gt;4)-beta-linkages between N-acetylmuramic acid and N-acetyl-D-glucosamine residues in a peptidoglycan and between N-acetyl-D-glucosamine residues in chitodextrins.. Its function is as follows. Lysozymes have primarily a bacteriolytic function; those in tissues and body fluids are associated with the monocyte-macrophage system and enhance the activity of immunoagents. The sequence is that of Lysozyme C (LYZ) from Numida meleagris (Helmeted guineafowl).